Consider the following 490-residue polypeptide: Ketol-acid reductoisomerase (NADP(+)) (490 aa).

The 192-residue stretch at 17–208 (LAQCEFMNAD…GGHRAGVLKS (192 aa)) folds into the KARI N-terminal Rossmann domain. NADP(+) contacts are provided by residues 45–48 (CGAQ), Arg-68, Arg-76, Ser-78, and 108–110 (DKQ). The active site involves His-132. Gly-158 serves as a coordination point for NADP(+). 2 consecutive KARI C-terminal knotted domains span residues 209 to 353 (SFIA…AEQE) and 355 to 486 (FDNG…MSAM). Positions 217, 221, 389, and 393 each coordinate Mg(2+). Residue Ser-414 coordinates substrate.

Belongs to the ketol-acid reductoisomerase family. Requires Mg(2+) as cofactor.

The enzyme catalyses (2R)-2,3-dihydroxy-3-methylbutanoate + NADP(+) = (2S)-2-acetolactate + NADPH + H(+). It catalyses the reaction (2R,3R)-2,3-dihydroxy-3-methylpentanoate + NADP(+) = (S)-2-ethyl-2-hydroxy-3-oxobutanoate + NADPH + H(+). Its pathway is amino-acid biosynthesis; L-isoleucine biosynthesis; L-isoleucine from 2-oxobutanoate: step 2/4. The protein operates within amino-acid biosynthesis; L-valine biosynthesis; L-valine from pyruvate: step 2/4. Functionally, involved in the biosynthesis of branched-chain amino acids (BCAA). Catalyzes an alkyl-migration followed by a ketol-acid reduction of (S)-2-acetolactate (S2AL) to yield (R)-2,3-dihydroxy-isovalerate. In the isomerase reaction, S2AL is rearranged via a Mg-dependent methyl migration to produce 3-hydroxy-3-methyl-2-ketobutyrate (HMKB). In the reductase reaction, this 2-ketoacid undergoes a metal-dependent reduction by NADPH to yield (R)-2,3-dihydroxy-isovalerate. This chain is Ketol-acid reductoisomerase (NADP(+)), found in Pseudoalteromonas translucida (strain TAC 125).